The following is a 261-amino-acid chain: EKC/KEOPS complex subunit BUD32 (261 aa).

Residues 16–261 (DVDIAPISQG…LRGRKRSMLG (246 aa)) form the Protein kinase domain. Residues 22–30 (ISQGAEAIV) and Lys43 each bind ATP. The active-site Proton acceptor is Asp161. Residues Ser187 and Ser189 each carry the phosphoserine; by autocatalysis modification.

This sequence belongs to the protein kinase superfamily. BUD32 family. In terms of assembly, component of the EKC/KEOPS complex composed of at least BUD32, CGI121, GON7, KAE1 and PCC1; the whole complex dimerizes.

It localises to the cytoplasm. It is found in the nucleus. Its subcellular location is the chromosome. The protein resides in the telomere. The catalysed reaction is L-seryl-[protein] + ATP = O-phospho-L-seryl-[protein] + ADP + H(+). The enzyme catalyses L-threonyl-[protein] + ATP = O-phospho-L-threonyl-[protein] + ADP + H(+). Its function is as follows. Component of the EKC/KEOPS complex that is required for the formation of a threonylcarbamoyl group on adenosine at position 37 (t(6)A37) in tRNAs that read codons beginning with adenine. The complex is probably involved in the transfer of the threonylcarbamoyl moiety of threonylcarbamoyl-AMP (TC-AMP) to the N6 group of A37. BUD32 has ATPase activity in the context of the EKC/KEOPS complex and likely plays a supporting role to the catalytic subunit KAE1. The EKC/KEOPS complex also promotes both telomere uncapping and telomere elongation. The complex is required for efficient recruitment of transcriptional coactivators. Important for bud site selection. In Saccharomyces cerevisiae (strain ATCC 204508 / S288c) (Baker's yeast), this protein is EKC/KEOPS complex subunit BUD32 (BUD32).